Here is a 411-residue protein sequence, read N- to C-terminus: Na(+)-translocating NADH-quinone reductase subunit F (411 aa).

A helical membrane pass occupies residues 5 to 25 (VILALGIAAFTVIVLVLVAII). The 2Fe-2S ferredoxin-type domain maps to 36-130 (GDITIDINDD…NMEVELPEEI (95 aa)). The [2Fe-2S] cluster site is built by cysteine 73, cysteine 79, cysteine 82, and cysteine 114. The 141-residue stretch at 133 to 273 (VKKWECTVIS…SGPFGEFFAK (141 aa)) folds into the FAD-binding FR-type domain. Residues 276-393 (DAEMVFIGGG…PVMNAAVIKM (118 aa)) are catalytic.

Belongs to the NqrF family. Composed of six subunits; NqrA, NqrB, NqrC, NqrD, NqrE and NqrF. Requires [2Fe-2S] cluster as cofactor. FAD serves as cofactor.

The protein resides in the cell inner membrane. It catalyses the reaction a ubiquinone + n Na(+)(in) + NADH + H(+) = a ubiquinol + n Na(+)(out) + NAD(+). In terms of biological role, NQR complex catalyzes the reduction of ubiquinone-1 to ubiquinol by two successive reactions, coupled with the transport of Na(+) ions from the cytoplasm to the periplasm. The first step is catalyzed by NqrF, which accepts electrons from NADH and reduces ubiquinone-1 to ubisemiquinone by a one-electron transfer pathway. This chain is Na(+)-translocating NADH-quinone reductase subunit F, found in Haemophilus influenzae (strain ATCC 51907 / DSM 11121 / KW20 / Rd).